Reading from the N-terminus, the 522-residue chain is Colicin-E1 (522 aa).

Disordered regions lie at residues 26-52 (NGTP…AAIH) and 136-165 (EEKA…REKA). Positions 30-42 (DGSGSGGGGGKGG) are enriched in gly residues. Helical transmembrane passes span 471 to 487 (AADA…FSLL) and 494 to 510 (IWGI…YIDK).

This sequence belongs to the channel forming colicin family.

Its subcellular location is the cell membrane. In terms of biological role, this colicin is a channel-forming colicin. This class of transmembrane toxins depolarize the cytoplasmic membrane, leading to dissipation of cellular energy. Colicins are polypeptide toxins produced by and active against E.coli and closely related bacteria. This is Colicin-E1 (cea) from Escherichia coli.